The primary structure comprises 238 residues: DNA repair protein RecO (238 aa).

The protein belongs to the RecO family.

Its function is as follows. Involved in DNA repair and RecF pathway recombination. The sequence is that of DNA repair protein RecO from Cereibacter sphaeroides (strain ATCC 17023 / DSM 158 / JCM 6121 / CCUG 31486 / LMG 2827 / NBRC 12203 / NCIMB 8253 / ATH 2.4.1.) (Rhodobacter sphaeroides).